A 298-amino-acid chain; its full sequence is MSSEKPTSLNAMRATNPCETPIQLLHEFGTKTGNHPVYTLEKAEGQAHNPSFTFRLVIGDITSLGEGPSKKTPKQKAAEFALNILRGDTSKCLPVTDTLRDPKKPPNQMQENPVGSLQELAVQKGWRLPEYTVAQESGPPHKREFTITCRVETFVETGSGTSKQVAKRVAAEKLLTKFKTISTDNIPLNKLIGNKMGCTWDSMRNSSGEKISMLKRSPLSIPNTDYVKMLKDVAEELDFNLTYLDIDELSVNGQYQCLAELSTNPITVCHGTGISCGNAHNDAAHNALQYLKIMCIKK.

DRBM domains lie at 20 to 87 (TPIQ…ILRG), 112 to 180 (NPVG…KFKT), and 225 to 293 (DYVK…YLKI).

Belongs to the PRKRA family. In terms of assembly, homodimer. Interacts with dicer1 and eif2ak2/pkr. Also able to interact with dsRNA. Associates with ribosomes. As to expression, expressed in brain, heart, kidney, liver, nerve and spleen.

Its subcellular location is the cytoplasm. The protein resides in the perinuclear region. It is found in the nucleus. It localises to the nucleolus. Its function is as follows. Activates eif2ak2/pkr in the absence of double-stranded RNA (dsRNA), leading to phosphorylation of eif2s1/efi2-alpha and inhibition of translation and induction of apoptosis. Required for siRNA production by dicer1 and for subsequent siRNA-mediated post-transcriptional gene silencing. Does not seem to be required for processing of pre-miRNA to miRNA by dicer1. The chain is Interferon-inducible double-stranded RNA-dependent protein kinase activator A homolog B (prkra-b) from Xenopus laevis (African clawed frog).